The following is a 162-amino-acid chain: Peroxiredoxin-2C (162 aa).

Residues 4–162 (VAVGDTLPDG…SGAEEILKAL (159 aa)) form the Thioredoxin domain. Cys-51 acts as the Cysteine sulfenic acid (-SOH) intermediate in catalysis.

This sequence belongs to the peroxiredoxin family. Prx5 subfamily. In terms of assembly, monomer.

The protein resides in the cytoplasm. It catalyses the reaction [glutaredoxin]-dithiol + a hydroperoxide = [glutaredoxin]-disulfide + an alcohol + H2O. Functionally, reduces hydrogen peroxide and alkyl hydroperoxides with reducing equivalents provided through the thioredoxin or glutaredoxin system. May be involved in intracellular redox signaling. In terms of biological role, thiol-specific peroxidase that catalyzes the reduction of hydrogen peroxide and organic hydroperoxides to water and alcohols, respectively. Plays a role in cell protection against oxidative stress by detoxifying peroxides. The sequence is that of Peroxiredoxin-2C (PRXIIC) from Oryza sativa subsp. japonica (Rice).